We begin with the raw amino-acid sequence, 246 residues long: Endonuclease NucS (246 aa).

This sequence belongs to the NucS endonuclease family.

It is found in the cytoplasm. Functionally, cleaves both 3' and 5' ssDNA extremities of branched DNA structures. This Corynebacterium urealyticum (strain ATCC 43042 / DSM 7109) protein is Endonuclease NucS.